We begin with the raw amino-acid sequence, 633 residues long: ATP-dependent zinc metalloprotease FtsH (633 aa).

Over 1–19 (MTPSNEPGKQDQIPQPGPT) the chain is Cytoplasmic. Residues 20–40 (IPNQYSFLWLSAAIFLMFLWL) form a helical membrane-spanning segment. Topologically, residues 41-133 (QGNNQQQQQE…SRSGRPWWQE (93 aa)) are periplasmic. The helical transmembrane segment at 134 to 154 (LILGFLPWILLLALMFWFWGA) threads the bilayer. The Cytoplasmic segment spans residues 155–633 (AQKRMTQGGG…LEEARSRETA (479 aa)). Position 226–233 (226–233 (GPPGTGKT)) interacts with ATP. Residue His447 participates in Zn(2+) binding. Residue Glu448 is part of the active site. His451 and Asp523 together coordinate Zn(2+).

In the central section; belongs to the AAA ATPase family. This sequence in the C-terminal section; belongs to the peptidase M41 family. In terms of assembly, homohexamer. It depends on Zn(2+) as a cofactor.

Its subcellular location is the cell inner membrane. Functionally, acts as a processive, ATP-dependent zinc metallopeptidase for both cytoplasmic and membrane proteins. Plays a role in the quality control of integral membrane proteins. This is ATP-dependent zinc metalloprotease FtsH from Marinobacter nauticus (strain ATCC 700491 / DSM 11845 / VT8) (Marinobacter aquaeolei).